A 228-amino-acid chain; its full sequence is MNASDLIRIMQFGDSVLPVGAFTFSNGVESAIQTGVVRDVPTLKGFVLTALKQAASCDGMGVVAAHRAVVADDRDGIIRADWAVNNRKLNEESRLMATRMGKKLAEMSIHVVEHPLISWWLEQIKNGNTAGTYPVTQAVVMAAQGIGQREVVVMHQYGVAMTILSAAMRLMRVTHFDTQHILFELNHDIEKFCDIAEIGDIDQMSSYVPIVDVLAAVHVKAHVRLFSN.

It belongs to the UreF family. In terms of assembly, ureD, UreF and UreG form a complex that acts as a GTP-hydrolysis-dependent molecular chaperone, activating the urease apoprotein by helping to assemble the nickel containing metallocenter of UreC. The UreE protein probably delivers the nickel.

The protein localises to the cytoplasm. Functionally, required for maturation of urease via the functional incorporation of the urease nickel metallocenter. This is Urease accessory protein UreF from Yersinia enterocolitica serotype O:8 / biotype 1B (strain NCTC 13174 / 8081).